We begin with the raw amino-acid sequence, 70 residues long: MKILYLLFAFLFLAFLSEPGNAYKRCHKKGGHCFPKTVICLPPSSDFGKMDCRWRWKCCKKGSVNNAISI.

The first 22 residues, 1–22 (MKILYLLFAFLFLAFLSEPGNA), serve as a signal peptide directing secretion. Intrachain disulfides connect Cys26-Cys58, Cys33-Cys52, and Cys40-Cys59.

This sequence belongs to the crotamine-myotoxin family. Monomer. Expressed by the venom gland.

The protein resides in the secreted. Cationic peptide that possesses multiple functions. It acts as a cell-penetrating peptide (CPP), and as a potent voltage-gated potassium channel (Kv) inhibitor. It exhibits antimicrobial activities, hind limb paralysis, and severe muscle necrosis by a non-enzymatic mechanism. The protein is Myotoxin of Crotalus adamanteus (Eastern diamondback rattlesnake).